The primary structure comprises 205 residues: Small ribosomal subunit protein uS4 (205 aa).

A disordered region spans residues 14–49; the sequence is RMGENIWGRPKSPVNRREYGPGQHGQRRKGKMSDFG. In terms of domain architecture, S4 RNA-binding spans 94 to 157; the sequence is SRLDAIVYRA…KQLVTVLEAV (64 aa).

The protein belongs to the universal ribosomal protein uS4 family. As to quaternary structure, part of the 30S ribosomal subunit. Contacts protein S5. The interaction surface between S4 and S5 is involved in control of translational fidelity.

One of the primary rRNA binding proteins, it binds directly to 16S rRNA where it nucleates assembly of the body of the 30S subunit. Its function is as follows. With S5 and S12 plays an important role in translational accuracy. This chain is Small ribosomal subunit protein uS4, found in Agrobacterium fabrum (strain C58 / ATCC 33970) (Agrobacterium tumefaciens (strain C58)).